The chain runs to 156 residues: Ribonuclease H (156 aa).

In terms of domain architecture, RNase H type-1 spans 1 to 142; sequence MNKQVEIFTD…CDELARQAAE (142 aa). Asp10, Glu48, Asp70, and Asp134 together coordinate Mg(2+). Residues 135–156 are disordered; sequence ELARQAAENPTEDDIGYQPEPQ.

Belongs to the RNase H family. Monomer. Mg(2+) serves as cofactor.

It localises to the cytoplasm. It carries out the reaction Endonucleolytic cleavage to 5'-phosphomonoester.. In terms of biological role, endonuclease that specifically degrades the RNA of RNA-DNA hybrids. In Vibrio cholerae serotype O1 (strain M66-2), this protein is Ribonuclease H.